Reading from the N-terminus, the 387-residue chain is Succinate--CoA ligase [ADP-forming] subunit beta (387 aa).

In terms of domain architecture, ATP-grasp spans 9 to 245 (KDLLESYGLK…KSQENAKELK (237 aa)). ATP-binding positions include K46, 53 to 55 (GRG), E100, Y103, and E108. Positions 200 and 214 each coordinate Mg(2+). Substrate is bound by residues N265 and 322–324 (GIV).

It belongs to the succinate/malate CoA ligase beta subunit family. As to quaternary structure, heterotetramer of two alpha and two beta subunits. Mg(2+) is required as a cofactor.

It catalyses the reaction succinate + ATP + CoA = succinyl-CoA + ADP + phosphate. The enzyme catalyses GTP + succinate + CoA = succinyl-CoA + GDP + phosphate. The protein operates within carbohydrate metabolism; tricarboxylic acid cycle; succinate from succinyl-CoA (ligase route): step 1/1. Functionally, succinyl-CoA synthetase functions in the citric acid cycle (TCA), coupling the hydrolysis of succinyl-CoA to the synthesis of either ATP or GTP and thus represents the only step of substrate-level phosphorylation in the TCA. The beta subunit provides nucleotide specificity of the enzyme and binds the substrate succinate, while the binding sites for coenzyme A and phosphate are found in the alpha subunit. The protein is Succinate--CoA ligase [ADP-forming] subunit beta of Francisella tularensis subsp. novicida (strain U112).